We begin with the raw amino-acid sequence, 328 residues long: Zinc finger Ran-binding domain-containing protein 2 (328 aa).

S9 carries the post-translational modification Phosphoserine. The segment at 9–40 (SDGDWICPDKKCGNVNFARRTSCNRCGREKTT) adopts a RanBP2-type 1 zinc-finger fold. An N6-acetyllysine mark is found at K18, K54, and K92. A RanBP2-type 2 zinc finger spans residues 65–94 (SANDWQCKTCSNVNWARRSECNMCNTPKYA). Residues 117–328 (REESDGEYDE…SGSRSSSKKK (212 aa)) form a disordered region. Residues S120, S153, S181, S188, and S193 each carry the phosphoserine modification. Positions 150-163 (DKESEGEEEDEDED) are enriched in acidic residues. Residues 151–328 (KESEGEEEDE…SGSRSSSKKK (178 aa)) form a required for nuclear targeting region. The segment covering 196–210 (KKSNRRSRSKSRSSH) has biased composition (basic residues). Low complexity-rich tracts occupy residues 211 to 224 (SRSS…SSSR) and 232 to 242 (RSSSSSQSRSR). Composition is skewed to basic residues over residues 251 to 271 (SRGS…RKRS) and 297 to 312 (KKRR…HHRS). The segment covering 313–328 (SSGSSHSGSRSSSKKK) has biased composition (low complexity).

Belongs to the ZRANB2 family. In terms of assembly, interacts with the C-terminal half of SNRNP70, the Arg/Ser-rich domain of AKAP17A as well as with U2AF1 and CLK1.

It localises to the nucleus. Splice factor required for alternative splicing of TRA2B/SFRS10 transcripts. Binds to ssRNA containing the consensus sequence 5'-AGGUAA-3'. May interfere with constitutive 5'-splice site selection. This is Zinc finger Ran-binding domain-containing protein 2 (ZRANB2) from Sus scrofa (Pig).